The primary structure comprises 278 residues: Shikimate dehydrogenase (NADP(+)) (278 aa).

Shikimate contacts are provided by residues 19-21 (SLS) and Thr66. Catalysis depends on Lys70, which acts as the Proton acceptor. Residue Asp82 coordinates NADP(+). The shikimate site is built by Asn91 and Asp107. Residues 133 to 137 (GSGGA), 157 to 162 (NRTRAR), and Ile222 each bind NADP(+). Tyr224 provides a ligand contact to shikimate. Residue Gly245 participates in NADP(+) binding.

Belongs to the shikimate dehydrogenase family. Homodimer.

The enzyme catalyses shikimate + NADP(+) = 3-dehydroshikimate + NADPH + H(+). It participates in metabolic intermediate biosynthesis; chorismate biosynthesis; chorismate from D-erythrose 4-phosphate and phosphoenolpyruvate: step 4/7. Functionally, involved in the biosynthesis of the chorismate, which leads to the biosynthesis of aromatic amino acids. Catalyzes the reversible NADPH linked reduction of 3-dehydroshikimate (DHSA) to yield shikimate (SA). This Jannaschia sp. (strain CCS1) protein is Shikimate dehydrogenase (NADP(+)).